The chain runs to 404 residues: S-adenosylmethionine synthase (404 aa).

139-144 is a binding site for ATP; it reads GKGSTD.

The protein belongs to the AdoMet synthase 2 family. It depends on Mg(2+) as a cofactor.

The enzyme catalyses L-methionine + ATP + H2O = S-adenosyl-L-methionine + phosphate + diphosphate. The protein operates within amino-acid biosynthesis; S-adenosyl-L-methionine biosynthesis; S-adenosyl-L-methionine from L-methionine: step 1/1. In terms of biological role, catalyzes the formation of S-adenosylmethionine from methionine and ATP. The chain is S-adenosylmethionine synthase from Saccharolobus islandicus (strain Y.N.15.51 / Yellowstone #2) (Sulfolobus islandicus).